The chain runs to 300 residues: Cathepsin B-like CP2 (300 aa).

The first 19 residues, 1–19 (MKLFLLAAAAFSAPALTVS), serve as a signal peptide directing secretion. 3 disulfides stabilise this stretch: cysteine 88–cysteine 115, cysteine 98–cysteine 141, and cysteine 134–cysteine 177. The active site involves cysteine 101. Active-site residues include histidine 245 and asparagine 266.

It belongs to the peptidase C1 family.

The protein resides in the vacuole. Its function is as follows. Thiol protease which is required for parasite excystation and invasion of the proximal small intestine of the human host. The polypeptide is Cathepsin B-like CP2 (CP2) (Giardia intestinalis (Giardia lamblia)).